We begin with the raw amino-acid sequence, 426 residues long: 2-(3-amino-3-carboxypropyl)histidine synthase subunit 1 (426 aa).

[4Fe-4S] cluster contacts are provided by Cys-133, Cys-239, and Cys-368.

The protein belongs to the DPH1/DPH2 family. DPH1 subfamily. In terms of assembly, component of the 2-(3-amino-3-carboxypropyl)histidine synthase complex composed of DPH1, DPH2, DPH3 and a NADH-dependent reductase, predominantly CBR1. The cofactor is [4Fe-4S] cluster.

It is found in the cytoplasm. It carries out the reaction L-histidyl-[translation elongation factor 2] + S-adenosyl-L-methionine = 2-[(3S)-amino-3-carboxypropyl]-L-histidyl-[translation elongation factor 2] + S-methyl-5'-thioadenosine + H(+). Its pathway is protein modification; peptidyl-diphthamide biosynthesis. Its function is as follows. Catalyzes the first step of diphthamide biosynthesis, a post-translational modification of histidine which occurs in elongation factor 2. DPH1 and DPH2 transfer a 3-amino-3-carboxypropyl (ACP) group from S-adenosyl-L-methionine (SAM) to a histidine residue, the reaction is assisted by a reduction system comprising DPH3 and a NADH-dependent reductase, predominantly CBR1. This Eremothecium gossypii (strain ATCC 10895 / CBS 109.51 / FGSC 9923 / NRRL Y-1056) (Yeast) protein is 2-(3-amino-3-carboxypropyl)histidine synthase subunit 1 (DPH1).